A 411-amino-acid chain; its full sequence is Serine--tRNA ligase (411 aa).

226 to 228 contributes to the L-serine binding site; sequence TSE. An ATP-binding site is contributed by 257–259; sequence RKE. Position 280 (Glu-280) interacts with L-serine. 344–347 is an ATP binding site; sequence EISS. Residue Ser-379 coordinates L-serine.

The protein belongs to the class-II aminoacyl-tRNA synthetase family. Type-1 seryl-tRNA synthetase subfamily. In terms of assembly, homodimer. The tRNA molecule binds across the dimer.

The protein localises to the cytoplasm. It carries out the reaction tRNA(Ser) + L-serine + ATP = L-seryl-tRNA(Ser) + AMP + diphosphate + H(+). The catalysed reaction is tRNA(Sec) + L-serine + ATP = L-seryl-tRNA(Sec) + AMP + diphosphate + H(+). Its pathway is aminoacyl-tRNA biosynthesis; selenocysteinyl-tRNA(Sec) biosynthesis; L-seryl-tRNA(Sec) from L-serine and tRNA(Sec): step 1/1. In terms of biological role, catalyzes the attachment of serine to tRNA(Ser). Is also able to aminoacylate tRNA(Sec) with serine, to form the misacylated tRNA L-seryl-tRNA(Sec), which will be further converted into selenocysteinyl-tRNA(Sec). This Campylobacter jejuni subsp. jejuni serotype O:2 (strain ATCC 700819 / NCTC 11168) protein is Serine--tRNA ligase.